A 148-amino-acid chain; its full sequence is Large ribosomal subunit protein uL15 (148 aa).

Positions 12-52 are disordered; sequence ERKNRKRVGRGGGSGWGGTSGKGHKGQNARSGGGVPAWFEG. Residues 21 to 32 show a composition bias toward gly residues; sequence RGGGSGWGGTSG.

The protein belongs to the universal ribosomal protein uL15 family. In terms of assembly, part of the 50S ribosomal subunit.

Its function is as follows. Binds to the 23S rRNA. The protein is Large ribosomal subunit protein uL15 of Maridesulfovibrio salexigens (strain ATCC 14822 / DSM 2638 / NCIMB 8403 / VKM B-1763) (Desulfovibrio salexigens).